We begin with the raw amino-acid sequence, 557 residues long: Hepatocyte nuclear factor 1-beta (557 aa).

Positions 1–31 (MVSKLTSLQQELLSALLSSGVTKEVLIQALE) are dimerization. An HNF-p1 domain is found at 1 to 32 (MVSKLTSLQQELLSALLSSGVTKEVLIQALEE). Phosphoserine is present on residues Ser49, Ser52, Ser75, and Ser80. A disordered region spans residues 66 to 85 (TNGHAKGRLSGDEGSEDGDD). The region spanning 93-188 (KELQALNTEE…ILRQFNQTVQ (96 aa)) is the POU-specific atypical domain. Residues 231-311 (MRRNRFKWGP…NRRKEEAFRQ (81 aa)) constitute a DNA-binding region (homeobox; HNF1-type). The segment at 324–370 (HNLNPLLTHGSPHHQPSSSPPNKLSGVRYSQPGNNEVTSSSTISHHG) is disordered. Over residues 354 to 370 (QPGNNEVTSSSTISHHG) the composition is skewed to polar residues.

The protein belongs to the HNF1 homeobox family. Binds DNA as a dimer. Can form homodimer or heterodimer with HNF1-alpha. Interacts (via HNF-p1 domain) with PCBD1; the interaction increases its transactivation activity. As to expression, liver, kidney and intestine.

It localises to the nucleus. Its function is as follows. Transcription factor that binds to the inverted palindrome 5'-GTTAATNATTAAC-3'. Binds to the FPC element in the cAMP regulatory unit of the PLAU gene. Transcriptional activity is increased by coactivator PCBD1. The polypeptide is Hepatocyte nuclear factor 1-beta (Hnf1b) (Rattus norvegicus (Rat)).